The sequence spans 553 residues: Solute carrier family 22 member 12 (553 aa).

The chain crosses the membrane as a helical span at residues 10 to 30 (VGGLGRFQLFQTVALVTPILW). N56 carries N-linked (GlcNAc...) asparagine glycosylation. Transmembrane regions (helical) follow at residues 146–166 (PMAQ…CGHA), 182–202 (LVSV…YCLF), 204–224 (FLLA…LMEW), 232–252 (LVMT…GSVA), 260–280 (MLQL…WWLP), 351–371 (IISM…ALDL), 378–398 (IFLL…GSLL), 412–432 (FLVL…GMGV), 435–455 (SALA…ITIF), 466–486 (MTAV…GPLV), and 495–515 (WMPL…ALLL). A Phosphoserine modification is found at S534. T542 carries the post-translational modification Phosphothreonine.

This sequence belongs to the major facilitator (TC 2.A.1) superfamily. Organic cation transporter (TC 2.A.1.19) family. As to quaternary structure, interacts with PDZK1. Post-translationally, N-glycosylated. Detected in kidney (at protein level). Detected in kidney cortex, in proximal tubules.

It is found in the apical cell membrane. It carries out the reaction urate(out) + (S)-lactate(in) = urate(in) + (S)-lactate(out). The catalysed reaction is nicotinate(in) + urate(out) = nicotinate(out) + urate(in). It catalyses the reaction urate(out) + n chloride(in) = urate(in) + n chloride(out). The enzyme catalyses orotate(out) + nicotinate(in) = orotate(in) + nicotinate(out). Functionally, electroneutral antiporter that translocates urate across the apical membrane of proximal tubular cells in exchange for monovalent organic or inorganic anions. Involved in renal reabsorption of urate and helps maintaining blood levels of uric acid. Mediates urate uptake by an exchange with organic anions such as (S)-lactate and nicotinate, and inorganic anion Cl(-). Other inorganic anions such as Br(-), I(-) and NO3(-) may also act as counteranions that exchange for urate. Also mediates orotate tubular uptake coupled with nicotinate efflux and to a lesser extent with lactate efflux, therefore displaying a potential role in orotate renal reabsorption. Orotate transport is Cl(-)-dependent. The chain is Solute carrier family 22 member 12 from Mus musculus (Mouse).